Consider the following 293-residue polypeptide: Mediator of RNA polymerase II transcription subunit 27 (293 aa).

Belongs to the Mediator complex subunit 27 family. In terms of assembly, component of the Mediator complex, which includes at least CDK8, MED4, MED6, MED11, MED14, MED17, MED18, MED20, MED21, MED22, MED27, MED28, MED30 and MED31.

The protein localises to the nucleus. In terms of biological role, component of the Mediator complex, a coactivator involved in the regulated transcription of nearly all RNA polymerase II-dependent genes. Mediator functions as a bridge to convey information from gene-specific regulatory proteins to the basal RNA polymerase II transcription machinery. Mediator is recruited to promoters by direct interactions with regulatory proteins and serves as a scaffold for the assembly of a functional preinitiation complex with RNA polymerase II and the general transcription factors. Required for activated transcription of the MtnA gene. The polypeptide is Mediator of RNA polymerase II transcription subunit 27 (MED27) (Drosophila melanogaster (Fruit fly)).